A 1315-amino-acid chain; its full sequence is Chaoptin (1315 aa).

The signal sequence occupies residues 1 to 29 (MGLEFFFKFGYAFLTITLMIMIWMSLARA). An N-linked (GlcNAc...) (high mannose) asparagine; alternate glycan is attached at Asn-77. Residue Asn-77 is glycosylated (N-linked (GlcNAc...) (paucimannose) asparagine; alternate). LRR repeat units follow at residues 80 to 101 (KVFMLHMENTGLREIEPYFLQS), 103 to 124 (GMYRLKISGNHLTEIPDDAFTG), 128 to 149 (SLWELILPQNDLVEIPSKSLRH), 152 to 173 (KLRHLDLGYNHITHIQHDSFRG), 177 to 198 (SLQTLILRENCISQLMSHSFSG), 201 to 222 (ILETLDLSGNNLFEIDPNVFVD), 226 to 247 (RLTRLLLTDNILSEIPYDALGP), 250 to 271 (SLRTLDISHNVIWSLSGNETYE), and 279 to 300 (NLDNLHLEYNHIEVLPPNSFKY). Asn-267 is a glycosylation site (N-linked (GlcNAc...) (paucimannose) asparagine; alternate). N-linked (GlcNAc...) (complex) asparagine; alternate glycosylation occurs at Asn-267. An N-linked (GlcNAc...) (high mannose) asparagine; alternate glycan is attached at Asn-305. Residue Asn-305 is glycosylated (N-linked (GlcNAc...) (paucimannose) asparagine; alternate). LRR repeat units follow at residues 326-347 (RIREIYMRYCGLTNISPVAFDS), 351-372 (SLQILDLSGNNLTKLHHKLFNN), 375-396 (VLRVISMRDNKIKIQKPTETFN), 401-424 (TLLKLDLSGDRNDPTNLQTLRNMT), 477-498 (GLKRLDFSENGISSIENDAFHE), 527-548 (SLQELDFSNNHISSMSDTSFHF), 551-572 (NLRLLELHDNRIEQVLKGTFQG), 577-598 (KLEEISLRFNHLTSISQHTFFD), 601-622 (ALRKLHLDDNKIDKIERRAFMN), 625-646 (ELEYLSLRGNKINNLADESFQN), 649-670 (KLEILDMAFNQLPNFNFDYFDQ), 676-696 (NLNVNVSHNQIRQLMYNSSWS), 708-729 (NIKILDLSHNNISIIHPGYFRP), 733-754 (SLTHLHLGYNSLMNTTRDVFGN), 757-778 (HLQWLDLSYNWIHELDFDAFKN), 781-802 (QLQLVFFGHNYLSDIPQDIFKP), 805-826 (GLRIVDFSHNHLRGLPDNLFYN), 828-849 (GMEKLDVSHNMMLKIPSSSLSS), 854-875 (TLCELHLSNNFISTIHSMDLSN), 879-900 (SLRYLDISYNYLLRIDDAVFAT), 903-924 (KLAVLDLSHNRDLKVMDKSFMG), 928-948 (SLIKLGLENISLSTVPEIRLK), 949-970 (YLREFRLGYNELPSIPQELAHN), 973-994 (NLRMLDLSNNDLTNVPLMTQAL), 996-1017 (HLRRLMLSGNPITSLNNNSFDG), 1021-1044 (DLEMLDISNFRLHYFEYGCLDSLP), and 1045-1066 (HLRSLKLTAYSHLEHFNIPHLL). Residue Asn-361 is glycosylated (N-linked (GlcNAc...) (high mannose) asparagine). Asn-422 carries an N-linked (GlcNAc...) asparagine glycan. N-linked (GlcNAc...) (high mannose) asparagine glycosylation is present at Asn-680. Asn-692 is a glycosylation site (N-linked (GlcNAc...) (high mannose) asparagine; alternate). An N-linked (GlcNAc...) (paucimannose) asparagine; alternate glycan is attached at Asn-692. N-linked (GlcNAc...) (high mannose) asparagine glycosylation is present at Asn-718. An N-linked (GlcNAc...) asparagine glycan is attached at Asn-746. Asn-936 carries N-linked (GlcNAc...) (high mannose) asparagine glycosylation. N-linked (GlcNAc...) (paucimannose) asparagine glycosylation is present at Asn-970. Asn-1012 carries an N-linked (GlcNAc...) (complex) asparagine glycan. 3 N-linked (GlcNAc...) (high mannose) asparagine glycosylation sites follow: Asn-1122, Asn-1152, and Asn-1171. The 64-residue stretch at 1211–1274 (TDLNCDCDLG…DDLRETRCEN (64 aa)) folds into the LRRCT domain.

This sequence belongs to the chaoptin family. As to expression, expressed in photoreceptor cells and their axons in the adult retina, the ocellus and larval photoreceptor organ.

The protein resides in the cell membrane. Its function is as follows. Required for photoreceptor cell morphogenesis. Mediates homophilic cellular adhesion. In Drosophila melanogaster (Fruit fly), this protein is Chaoptin (chp).